The following is a 749-amino-acid chain: Dynamin-1-like protein (749 aa).

Met1 bears the N-acetylmethionine mark. The region spanning 22-315 (IIQLPQIVVV…LMHHIRDCLP (294 aa)) is the Dynamin-type G domain. Positions 32–39 (GTQSSGKS) are G1 motif. 32–40 (GTQSSGKSS) lines the GTP pocket. A G2 motif region spans residues 58-60 (VTR). Positions 74–93 (DKRKTTGEENDPATWKNSRH) are disordered. The interval 159–162 (DLPG) is G3 motif. The tract at residues 228-231 (TKLD) is G4 motif. GTP-binding positions include 228–234 (TKLDLMD) and 259–262 (NRSQ). The segment at 258–261 (VNRS) is G5 motif. The middle domain stretch occupies residues 357 to 502 (YCNTIEGTAK…NEMVHNLVAI (146 aa)). The tract at residues 461-698 (NYSTQELLRF…NHVKDTLQSE (238 aa)) is interaction with GSK3B. A b domain region spans residues 515–582 (ADACGLMNNN…IQESRRETKN (68 aa)). Positions 536–604 (ELPSAVSRDK…QEPTTGNWRG (69 aa)) are disordered. Ser542 carries the post-translational modification Phosphoserine. Residues Lys545 and Lys548 each participate in a glycyl lysine isopeptide (Lys-Gly) (interchain with G-Cter in SUMO) cross-link. The span at 550-567 (PSALAPASQEPSPAASAE) shows a compositional bias: low complexity. Residue Ser561 is modified to Phosphoserine. Basic and acidic residues predominate over residues 568 to 581 (ADGKLIQESRRETK). Residues Lys571 and Lys581 each participate in a glycyl lysine isopeptide (Lys-Gly) (interchain with G-Cter in SUMO) cross-link. O-linked (GlcNAc) threonine glycans are attached at residues Thr598 and Thr599. Lys607 is covalently cross-linked (Glycyl lysine isopeptide (Lys-Gly) (interchain with G-Cter in SUMO)). Lys610 carries the post-translational modification N6-acetyllysine; alternate. A Glycyl lysine isopeptide (Lys-Gly) (interchain with G-Cter in SUMO); alternate cross-link involves residue Lys610. A Glycyl lysine isopeptide (Lys-Gly) (interchain with G-Cter in SUMO) cross-link involves residue Lys619. A Phosphoserine modification is found at Ser620. A Glycyl lysine isopeptide (Lys-Gly) (interchain with G-Cter in SUMO) cross-link involves residue Lys621. Position 629 is a phosphoserine; by CDK1 and PINK1 (Ser629). Residue Ser650 is modified to Phosphoserine; by CAMK1 and PKA. Cys657 carries the S-nitrosocysteine modification. The 92-residue stretch at 657–748 (CEVIERLIKS…IIAEIRETHL (92 aa)) folds into the GED domain. The segment at 667–681 (YFLIVRKNIQDSVPK) is important for homodimerization.

It belongs to the TRAFAC class dynamin-like GTPase superfamily. Dynamin/Fzo/YdjA family. In terms of assembly, homotetramer; dimerizes through the N-terminal GTP-middle region of one molecule binding to the GED domain of another DNM1L molecule. Oligomerizes in a GTP-dependent manner to form membrane-associated tubules with a spiral pattern. Interacts with GSK3B and MARCHF5. Interacts (via the GTPase and B domains) with UBE2I; the interaction promotes sumoylation of DNM1L, mainly in its B domain. Interacts with PPP3CA; the interaction dephosphorylates DNM1L and regulates its transition to mitochondria. Interacts with BCL2L1 isoform BCL-X(L) and CLTA; DNM1L and BCL2L1 isoform BCL-X(L) may form a complex in synaptic vesicles that also contains clathrin and MFF. Interacts with MFF; the interaction is inhinited by C11orf65/MFI. Interacts with FIS1. Interacts with MIEF2 and MIEF1; GTP-dependent, regulates GTP hydrolysis and DNM1L oligomerization. Interacts with PGAM5; this interaction leads to dephosphorylation at Ser-656 and activation of GTPase activity and eventually to mitochondria fragmentation. Interacts with RALBP1; during mitosis, recruits DNM1L to the mitochondrion and mediates its activation by the mitotic kinase cyclin B-CDK1. In terms of processing, phosphorylation/dephosphorylation events on two sites near the GED domain regulate mitochondrial fission. Phosphorylation on Ser-650 by CAMK1 and PKA inhibits the GTPase activity, leading to a defect in mitochondrial fission promoting mitochondrial elongation. Dephosphorylated on this site by PPP3CA which promotes mitochondrial fission. Phosphorylation on Ser-629 by CDK1 and PINK1 activates the GTPase activity and promotes mitochondrial fission. Phosphorylated in a circadian manner at Ser-650. Sumoylated on various lysine residues within the B domain, probably by MUL1. Sumoylation positively regulates mitochondrial fission. Desumoylated by SENP5 during G2/M transition of mitosis. Appears to be linked to its catalytic activity. Post-translationally, S-nitrosylation increases DNM1L dimerization, mitochondrial fission and causes neuronal damage. In terms of processing, O-GlcNAcylation augments the level of the GTP-bound active form of DNM1L and induces translocation from the cytoplasm to mitochondria in cardiomyocytes. It also decreases phosphorylation at Ser-650. Ubiquitination by MARCHF5 affects mitochondrial morphology.

The protein localises to the cytoplasm. The protein resides in the cytosol. Its subcellular location is the golgi apparatus. It localises to the endomembrane system. It is found in the mitochondrion outer membrane. The protein localises to the peroxisome. The protein resides in the membrane. Its subcellular location is the clathrin-coated pit. It localises to the cytoplasmic vesicle. It is found in the secretory vesicle. The protein localises to the synaptic vesicle membrane. The catalysed reaction is GTP + H2O = GDP + phosphate + H(+). Functionally, functions in mitochondrial and peroxisomal division. Mediates membrane fission through oligomerization into membrane-associated tubular structures that wrap around the scission site to constrict and sever the mitochondrial membrane through a GTP hydrolysis-dependent mechanism. The specific recruitment at scission sites is mediated by membrane receptors like MFF, MIEF1 and MIEF2 for mitochondrial membranes. While the recruitment by the membrane receptors is GTP-dependent, the following hydrolysis of GTP induces the dissociation from the receptors and allows DNM1L filaments to curl into closed rings that are probably sufficient to sever a double membrane. Acts downstream of PINK1 to promote mitochondrial fission in a PRKN-dependent manner. Plays an important role in mitochondrial fission during mitosis. Through its function in mitochondrial division, ensures the survival of at least some types of postmitotic neurons, including Purkinje cells, by suppressing oxidative damage. Required for normal brain development, including that of cerebellum. Facilitates developmentally regulated apoptosis during neural tube formation. Required for a normal rate of cytochrome c release and caspase activation during apoptosis; this requirement may depend upon the cell type and the physiological apoptotic cues. Required for formation of endocytic vesicles. Proposed to regulate synaptic vesicle membrane dynamics through association with BCL2L1 isoform Bcl-X(L) which stimulates its GTPase activity in synaptic vesicles; the function may require its recruitment by MFF to clathrin-containing vesicles. Required for programmed necrosis execution. Rhythmic control of its activity following phosphorylation at Ser-650 is essential for the circadian control of mitochondrial ATP production. In Bos taurus (Bovine), this protein is Dynamin-1-like protein.